Reading from the N-terminus, the 180-residue chain is Pro-glucagon (180 aa).

The signal sequence occupies residues 1–20 (MKSIYFVAGLFVMLVQGSWQ). Residues 26-56 (TEEKSRSFSAPQTEPLNDLDQMNEDKRHSQG) are disordered. The residue at position 54 (Ser54) is a Phosphoserine. Positions 84–89 (NKNNIA) are excised as a propeptide. A phosphoserine mark is found at Ser105 and Ser108. Residue Arg127 is modified to Arginine amide. Residues 131-145 (DFPEEVAIVEEFRRR) constitute a propeptide that is removed on maturation. Ser150 and Ser152 each carry phosphoserine.

This sequence belongs to the glucagon family. In terms of processing, proglucagon is post-translationally processed in a tissue-specific manner in pancreatic A cells and intestinal L cells. In pancreatic A cells, the major bioactive hormone is glucagon cleaved by PCSK2/PC2. In the intestinal L cells PCSK1/PC1 liberates GLP-1, GLP-2, glicentin and oxyntomodulin. GLP-1 is further N-terminally truncated by post-translational processing in the intestinal L cells resulting in GLP-1(7-37) GLP-1-(7-36)amide. The C-terminal amidation is neither important for the metabolism of GLP-1 nor for its effects on the endocrine pancreas. In terms of tissue distribution, glucagon is secreted in the A cells of the islets of Langerhans. GLP-1, GLP-2, oxyntomodulin and glicentin are secreted from enteroendocrine cells throughout the gastrointestinal tract. GLP-1 and GLP-2 are also secreted in selected neurons in the brain.

Its subcellular location is the secreted. Its function is as follows. Plays a key role in glucose metabolism and homeostasis. Regulates blood glucose by increasing gluconeogenesis and decreasing glycolysis. A counterregulatory hormone of insulin, raises plasma glucose levels in response to insulin-induced hypoglycemia. Plays an important role in initiating and maintaining hyperglycemic conditions in diabetes. Functionally, potent stimulator of glucose-dependent insulin release. Also stimulates insulin release in response to IL6. Plays important roles on gastric motility and the suppression of plasma glucagon levels. May be involved in the suppression of satiety and stimulation of glucose disposal in peripheral tissues, independent of the actions of insulin. Has growth-promoting activities on intestinal epithelium. May also regulate the hypothalamic pituitary axis (HPA) via effects on LH, TSH, CRH, oxytocin, and vasopressin secretion. Increases islet mass through stimulation of islet neogenesis and pancreatic beta cell proliferation. Inhibits beta cell apoptosis. Stimulates intestinal growth and up-regulates villus height in the small intestine, concomitant with increased crypt cell proliferation and decreased enterocyte apoptosis. The gastrointestinal tract, from the stomach to the colon is the principal target for GLP-2 action. Plays a key role in nutrient homeostasis, enhancing nutrient assimilation through enhanced gastrointestinal function, as well as increasing nutrient disposal. Stimulates intestinal glucose transport and decreases mucosal permeability. In terms of biological role, significantly reduces food intake. Inhibits gastric emptying in humans. Suppression of gastric emptying may lead to increased gastric distension, which may contribute to satiety by causing a sensation of fullness. Its function is as follows. May modulate gastric acid secretion and the gastro-pyloro-duodenal activity. May play an important role in intestinal mucosal growth in the early period of life. The sequence is that of Pro-glucagon (GCG) from Canis lupus familiaris (Dog).